Consider the following 216-residue polypeptide: Large ribosomal subunit protein uL3 (216 aa).

Residues 135–156 (LGASHGTQRKHRSPGSIGGCAT) are disordered.

This sequence belongs to the universal ribosomal protein uL3 family. As to quaternary structure, part of the 50S ribosomal subunit. Forms a cluster with proteins L14 and L19.

In terms of biological role, one of the primary rRNA binding proteins, it binds directly near the 3'-end of the 23S rRNA, where it nucleates assembly of the 50S subunit. This Thermobifida fusca (strain YX) protein is Large ribosomal subunit protein uL3.